The sequence spans 492 residues: Rab5 GDP/GTP exchange factor (492 aa).

The segment at 1-74 is interaction with ubiquitinated proteins; that stretch reads MSLKSERRGI…EEEAFASSQS (74 aa). The A20-type zinc-finger motif lies at 13 to 47; the sequence is DQSELLCKKGCGYYGNPAWQGFCSKCWREEYHKAR. 4 residues coordinate Zn(2+): cysteine 19, cysteine 23, cysteine 35, and cysteine 38. Residues 66 to 85 form a disordered region; the sequence is EEAFASSQSSQGAQSLTFSK. The segment covering 69 to 84 has biased composition (low complexity); it reads FASSQSSQGAQSLTFS. Phosphoserine occurs at positions 125 and 133. N6-acetyllysine is present on residues lysine 152 and lysine 171. In terms of domain architecture, VPS9 spans 233 to 376; that stretch reads EKKDLAIQKR…IEKLDAQSLN (144 aa). Phosphoserine occurs at positions 374, 378, 391, and 401. Residues 408 to 449 are a coiled coil; that stretch reads VKQMYKNLDLLSQLNERQERIMNEAKKLEKDLIDWTDGIAKE. Positions 471-492 are disordered; the sequence is IDSENVENDKLPPPLQPQVYAG.

As to quaternary structure, heterodimer with RABEP1. The heterodimer binds RAB4A and RAB5A that have been activated by GTP-binding. Binds TSC2, GGA1, GGA2, GGA3, AP1G1 and AP1G2. Interacts with RAB21, and with 100-fold lower affinity also with RAB22. Interacts with ubiquitinated EGFR. Interacts with RGS14; the interaction is GTP-dependent. Monoubiquitinated. As to expression, detected in brain.

Its subcellular location is the cytoplasm. The protein resides in the early endosome. It is found in the recycling endosome. Functionally, rab effector protein acting as linker between gamma-adaptin and RAB5A. Involved in endocytic membrane fusion and membrane trafficking of recycling endosomes. Stimulates nucleotide exchange on RAB5A. Can act as a ubiquitin ligase. This Bos taurus (Bovine) protein is Rab5 GDP/GTP exchange factor (RABGEF1).